Reading from the N-terminus, the 1451-residue chain is ABC transporter G family member 32 (1451 aa).

An ABC transporter 1 domain is found at 162-435 (GNALHISPTR…FELMGFRCPQ (274 aa)). 195-202 (GPPGSGKT) serves as a coordination point for ATP. In terms of domain architecture, ABC transmembrane type-2 1 spans 513-725 (ALLKANIDRE…AQNAISTNEF (213 aa)). The next 6 membrane-spanning stretches (helical) occupy residues 531–551 (FVYI…MTTF), 563–583 (GTIY…NGFA), 618–638 (IPVT…VVGF), 650–670 (LLLV…AGIG), 674–694 (VVSQ…GGFI), and 760–780 (IGFG…TVAL). The disordered stretch occupies residues 809 to 835 (ILDSCEEKKSRKKEQSQSVNQKHWNNT). Residues 813–823 (CEEKKSRKKEQ) show a composition bias toward basic and acidic residues. An ABC transporter 2 domain is found at 853–1105 (LSFNDIKYSV…KLIEYFEGIE (253 aa)). Position 898 to 905 (898 to 905 (GVSGAGKT)) interacts with ATP. The region spanning 1178-1392 (TQCIACLWKH…TLYGLVASQF (215 aa)) is the ABC transmembrane type-2 2 domain. The next 7 membrane-spanning stretches (helical) occupy residues 1197–1217 (YTAV…TMFW), 1237–1257 (YAAV…VVVV), 1285–1305 (LPYI…MIGF), 1312–1332 (FIWY…FGMM), 1342–1362 (IAAI…GYLI), 1373–1393 (WYCW…SQFG), and 1423–1443 (LVAV…SFAI).

It belongs to the ABC transporter superfamily. ABCG family. PDR (TC 3.A.1.205) subfamily.

Its subcellular location is the membrane. Functionally, may be a general defense protein. The chain is ABC transporter G family member 32 from Oryza sativa subsp. japonica (Rice).